The primary structure comprises 272 residues: Digeranylgeranylglyceryl phosphate synthase (272 aa).

Helical transmembrane passes span 16–36, 79–99, 100–120, 124–144, 148–168, 194–214, 217–237, and 252–272; these read AFIA…EIIL, ALYY…IISL, ENGI…YDLK, FIGN…GGLI, VNLG…REII, AVML…LLYY, IFSI…VYSA, and ISKY…MGAL.

It belongs to the UbiA prenyltransferase family. DGGGP synthase subfamily. Mg(2+) is required as a cofactor.

It is found in the cell membrane. The enzyme catalyses sn-3-O-(geranylgeranyl)glycerol 1-phosphate + (2E,6E,10E)-geranylgeranyl diphosphate = 2,3-bis-O-(geranylgeranyl)-sn-glycerol 1-phosphate + diphosphate. It participates in membrane lipid metabolism; glycerophospholipid metabolism. Its function is as follows. Prenyltransferase that catalyzes the transfer of the geranylgeranyl moiety of geranylgeranyl diphosphate (GGPP) to the C2 hydroxyl of (S)-3-O-geranylgeranylglyceryl phosphate (GGGP). This reaction is the second ether-bond-formation step in the biosynthesis of archaeal membrane lipids. This Methanosphaera stadtmanae (strain ATCC 43021 / DSM 3091 / JCM 11832 / MCB-3) protein is Digeranylgeranylglyceryl phosphate synthase.